A 331-amino-acid chain; its full sequence is Inner membrane ABC transporter permease protein YjfF (331 aa).

Residues Met1–Asn5 lie on the Cytoplasmic side of the membrane. Residues Leu6–Phe26 form a helical membrane-spanning segment. The Periplasmic segment spans residues Pro27 to Asn42. Residues Ala43–Leu63 form a helical membrane-spanning segment. At Ser64 to Leu88 the chain is on the cytoplasmic side. The helical transmembrane segment at Leu89 to Ile109 threads the bilayer. At Asp110–Lys113 the chain is on the periplasmic side. The helical transmembrane segment at Ile114–Val134 threads the bilayer. Residues Ser135–Gly159 are Cytoplasmic-facing. A helical transmembrane segment spans residues Gly160 to Ala180. The Periplasmic portion of the chain corresponds to His181–Thr222. Residues Leu223–Val243 form a helical membrane-spanning segment. At Glu244–Ser250 the chain is on the cytoplasmic side. A helical membrane pass occupies residues Val251 to Gly271. At Val272–Lys294 the chain is on the periplasmic side. A helical membrane pass occupies residues Ile295–Trp315. At Glu316–Gln331 the chain is on the cytoplasmic side.

The protein belongs to the binding-protein-dependent transport system permease family. AraH/RbsC subfamily. As to quaternary structure, the complex is composed of two ATP-binding proteins (YtfR), two transmembrane proteins (YtfT and YjfF) and a solute-binding protein (YtfQ).

It is found in the cell inner membrane. In terms of biological role, part of the ABC transporter complex YtfQRT-YjfF involved in galactofuranose transport. Probably responsible for the translocation of the substrate across the membrane. This is Inner membrane ABC transporter permease protein YjfF (yjfF) from Escherichia coli (strain K12).